The chain runs to 565 residues: uncharacterized protein (565 aa).

The next 13 membrane-spanning stretches (helical) occupy residues 8–28, 43–63, 95–115, 137–157, 167–187, 227–247, 268–288, 314–334, 367–387, 424–444, 460–480, 482–502, and 516–536; these read ISFI…GIFF, LAIF…LALI, MTYL…ICSI, WLIW…IPPL, MVVS…GFIV, FTGI…FFAY, WALF…AVAL, IVFG…INGF, VVGV…FTVI, ATWT…GAIV, FLPA…VTII, PFIN…TVLG, and VMLI…VYVE.

To M.pneumoniae MPN_095 and MPN_096.

It localises to the cell membrane. This is an uncharacterized protein from Mycoplasma pneumoniae (strain ATCC 29342 / M129 / Subtype 1) (Mycoplasmoides pneumoniae).